The primary structure comprises 411 residues: Inhibin beta B chain (411 aa).

The signal sequence occupies residues 1–28; sequence MDGLPGRALGAACLLLLAAGWLGPEAWG. The tract at residues 27-69 is disordered; the sequence is WGSPTPPPSPAAPPPPPPPGAPGGSQDTCTSCGGGGGGFRRPE. A propeptide spanning residues 29 to 296 is cleaved from the precursor; sequence SPTPPPSPAA…GDSRHRIRKR (268 aa). Over residues 30-47 the composition is skewed to pro residues; that stretch reads PTPPPSPAAPPPPPPPGA. N97 carries N-linked (GlcNAc...) asparagine glycosylation. Intrachain disulfides connect C300/C308, C307/C376, C336/C408, and C340/C410.

The protein belongs to the TGF-beta family. As to quaternary structure, dimeric, linked by one or more disulfide bonds. Inhibin B is a dimer of alpha and beta-B. Activin B is a homodimer of beta-B. Activin AB is a dimer of beta-A and beta-B. Interacts with FST and FSTL3. Alpha- and beta-B subunits are the predominant forms found in rat testis. Also expressed in ovary.

The protein resides in the secreted. Its function is as follows. Inhibins and activins inhibit and activate, respectively, the secretion of follitropin by the pituitary gland. Inhibins/activins are involved in regulating a number of diverse functions such as hypothalamic and pituitary hormone secretion, gonadal hormone secretion, germ cell development and maturation, erythroid differentiation, insulin secretion, nerve cell survival, embryonic axial development or bone growth, depending on their subunit composition. Inhibins appear to oppose the functions of activins. Functionally, activin B is a dimer of alpha and beta-B that plays a role in several essential biological processes including embryonic development, stem cell maintenance and differentiation, haematopoiesis, cell proliferation and wound healing. Signals through type I receptor ACVR1C, abundantly expressed in pancreatic beta cells, and type II receptors like ACVR2A. Upon ligand binding, these receptors phosphorylate intracellular signaling mediators SMAD2 and SMAD3, which form a complex with SMAD4, translocate to the nucleus, and regulate gene expression. Plays a crucial role in the induction of hepcidin by inflammation through activation of ACVR1C and subsequent phosphorylation of SMAD1/5/8. Regulates adipocyte lipid metabolism by decreasing non-esterified fatty acids and glycerol release and increases intracellular triglyceride content. Stimulates wound healing by promoting cell migration and hair follicle regeneration through the JNK and ERK signaling pathways downstream of RHOA. In terms of biological role, inhibin B is a dimer of alpha and beta-B that plays a crucial role in the regulation of the reproductive system by inhibiting the secretion of follicle-stimulating hormone (FSH) from the anterior pituitary gland. Thereby, maintains reproductive homeostasis in both males and females. Acts as a more potent suppressor of FSH release than inhibin A. Functions as competitive receptor antagonist binding activin type II receptors with high affinity in the presence of the TGF-beta type III coreceptor/TGFBR3L. The protein is Inhibin beta B chain (Inhbb) of Rattus norvegicus (Rat).